The primary structure comprises 147 residues: Nucleoside diphosphate kinase (147 aa).

ATP is bound by residues lysine 9, phenylalanine 57, arginine 85, threonine 91, arginine 102, and asparagine 112. The active-site Pros-phosphohistidine intermediate is histidine 115.

It belongs to the NDK family. In terms of assembly, homotetramer. The cofactor is Mg(2+).

It localises to the cytoplasm. The enzyme catalyses a 2'-deoxyribonucleoside 5'-diphosphate + ATP = a 2'-deoxyribonucleoside 5'-triphosphate + ADP. It carries out the reaction a ribonucleoside 5'-diphosphate + ATP = a ribonucleoside 5'-triphosphate + ADP. Functionally, major role in the synthesis of nucleoside triphosphates other than ATP. The ATP gamma phosphate is transferred to the NDP beta phosphate via a ping-pong mechanism, using a phosphorylated active-site intermediate. The chain is Nucleoside diphosphate kinase from Fervidobacterium nodosum (strain ATCC 35602 / DSM 5306 / Rt17-B1).